The primary structure comprises 208 residues: Ion-translocating oxidoreductase complex subunit G (208 aa).

A helical transmembrane segment spans residues 9–29 (GVTLAVFAALTTGLTAMVNAL). FMN phosphoryl threonine is present on Thr174.

It belongs to the RnfG family. In terms of assembly, the complex is composed of six subunits: RnfA, RnfB, RnfC, RnfD, RnfE and RnfG. It depends on FMN as a cofactor.

It is found in the cell inner membrane. Functionally, part of a membrane-bound complex that couples electron transfer with translocation of ions across the membrane. In Cronobacter sakazakii (strain ATCC BAA-894) (Enterobacter sakazakii), this protein is Ion-translocating oxidoreductase complex subunit G.